The following is a 711-amino-acid chain: DNA topoisomerase 3 (711 aa).

The 134-residue stretch at 2-135 (KSLILAEKPS…LRRLWISSVT (134 aa)) folds into the Toprim domain. Mg(2+)-binding residues include Glu8 and Asp104. Residues 152 to 580 (YNDLYYAALA…EMKDFTKDVV (429 aa)) enclose the Topo IA-type catalytic domain. The interaction with DNA stretch occupies residues 186–191 (SLGRVQ). The active-site O-(5'-phospho-DNA)-tyrosine intermediate is the Tyr305. The disordered stretch occupies residues 691-711 (MNKNEGLDNNPFKDALKNLNL).

Belongs to the type IA topoisomerase family. Mg(2+) serves as cofactor.

The catalysed reaction is ATP-independent breakage of single-stranded DNA, followed by passage and rejoining.. In terms of biological role, releases the supercoiling and torsional tension of DNA, which is introduced during the DNA replication and transcription, by transiently cleaving and rejoining one strand of the DNA duplex. Introduces a single-strand break via transesterification at a target site in duplex DNA. The scissile phosphodiester is attacked by the catalytic tyrosine of the enzyme, resulting in the formation of a DNA-(5'-phosphotyrosyl)-enzyme intermediate and the expulsion of a 3'-OH DNA strand. The free DNA strand then undergoes passage around the unbroken strand, thus removing DNA supercoils. Finally, in the religation step, the DNA 3'-OH attacks the covalent intermediate to expel the active-site tyrosine and restore the DNA phosphodiester backbone. The sequence is that of DNA topoisomerase 3 from Staphylococcus aureus (strain MRSA252).